Reading from the N-terminus, the 529-residue chain is Basal body-orientation factor 1 (529 aa).

Over residues 1–13 the composition is skewed to basic residues; the sequence is MPSKGKDKKKGKS. The segment at 1 to 22 is disordered; that stretch reads MPSKGKDKKKGKSRGKDTKKLI. 2 coiled-coil regions span residues 55–198 and 271–361; these read DTSR…LKQE and IKEK…EVER. A disordered region spans residues 510-529; sequence GKVVLPTIPKGPQESDTGTF.

It belongs to the BBOF1 family. As to quaternary structure, interacts with MNS1 and ODF2.

It localises to the cytoplasm. It is found in the cytoskeleton. Its subcellular location is the cilium basal body. The protein resides in the flagellum axoneme. Its function is as follows. Plays an essential role in sperm motility and male fertility by stabilizing the sperm flagellar axonemal structure. May be required for the stability of ODF2 and MANS1 proteins. Dispensable for the assembly and function of motile cilia. In Macaca fascicularis (Crab-eating macaque), this protein is Basal body-orientation factor 1.